We begin with the raw amino-acid sequence, 283 residues long: DegV domain-containing protein lin2658 (283 aa).

The DegV domain maps to 5–282; the sequence is IAVVTDSTTY…EGALGLTWSI (278 aa). Positions 63 and 96 each coordinate hexadecanoate.

May bind long-chain fatty acids, such as palmitate, and may play a role in lipid transport or fatty acid metabolism. In Listeria innocua serovar 6a (strain ATCC BAA-680 / CLIP 11262), this protein is DegV domain-containing protein lin2658.